The primary structure comprises 424 residues: Probable ribonuclease FAU-1 (424 aa).

The protein belongs to the FAU-1 family.

In terms of biological role, probable RNase involved in rRNA stability through maturation and/or degradation of precursor rRNAs. Binds to RNA in loop regions with AU-rich sequences. This Saccharolobus islandicus (strain L.S.2.15 / Lassen #1) (Sulfolobus islandicus) protein is Probable ribonuclease FAU-1.